The primary structure comprises 379 residues: Forkhead box protein F1 (379 aa).

The interval 1-45 (MSSAPEKQQPPHGGGGGGGGGGGAAMDPASSGPSKAKKTNAGIRR) is disordered. A compositionally biased stretch (gly residues) spans 12–24 (HGGGGGGGGGGGA). The fork-head DNA-binding region spans 47–138 (EKPPYSYIAL…EFMFEEGSFR (92 aa)).

Expressed in lung and placenta.

Its subcellular location is the nucleus. Probable transcription activator for a number of lung-specific genes. The sequence is that of Forkhead box protein F1 (FOXF1) from Homo sapiens (Human).